We begin with the raw amino-acid sequence, 494 residues long: DnaJ homolog subfamily C member 7 (494 aa).

The residue at position 2 (alanine 2) is an N-acetylalanine. 8 TPR repeats span residues 28 to 61 (AESFKEQGNAYYAKKDYNEAYNYYTKAIDMCPNN), 62 to 95 (ASYYGNRAATLMMLGRFREALGDAQQSVRLDDSF), 96 to 129 (VRGHLREGKCHLSLGNAMAACRSFQRALELDHKN), 142 to 175 (VMEYEKIAEVDFEKRDFRKVVFCMDRALEFAPAC), 210 to 243 (ADALYVRGLCLYYEDCIEKAVQFFVQALRMAPDH), 256 to 289 (LKAKKEDGNKAFKEGNYKLAYELYTEALGIDPNN), 294 to 327 (AKLYCNRGTVNSKLRQLEDAIEDCTNAVKLDDTY), and 328 to 361 (IKAYLRRAQCYMDTEQFEEAVRDYEKVYQTEKTK). A J domain is found at 381-451 (DYYKILGVDK…KKKTRYDSGQ (71 aa)). Serine 393 is subject to Phosphoserine.

Associates with complexes containing chaperones HSP70 and HSP90. Interacts with the GAP domain of NF1. Interacts with HSP90AA1. Interacts with HSPA1A/B; the interaction is enhanced by ATP. Interacts with HSP90AB1. Interacts with PGR. Interacts with RAD9A; the interaction is interrupted by UV and heat shock treatments. Interacts with HUS1 and RAD1. Interacts with NR1I3; this complex may also include HSP90 Interacts with HSPA8. In terms of tissue distribution, widely expressed with high levels in liver, skeletal muscle, kidney and testis.

The protein resides in the cytoplasm. It is found in the nucleus. It localises to the cytoskeleton. In terms of biological role, acts as a co-chaperone regulating the molecular chaperones HSP70 and HSP90 in folding of steroid receptors, such as the glucocorticoid receptor and the progesterone receptor. Proposed to act as a recycling chaperone by facilitating the return of chaperone substrates to early stages of chaperoning if further folding is required. In vitro, induces ATP-independent dissociation of HSP90 but not of HSP70 from the chaperone-substrate complexes. Recruits NR1I3 to the cytoplasm. This Mus musculus (Mouse) protein is DnaJ homolog subfamily C member 7 (Dnajc7).